A 324-amino-acid chain; its full sequence is DNA repair and recombination protein RadA (324 aa).

114–121 (GEFGSGKT) is a binding site for ATP.

This sequence belongs to the eukaryotic RecA-like protein family.

Functionally, involved in DNA repair and in homologous recombination. Binds and assemble on single-stranded DNA to form a nucleoprotein filament. Hydrolyzes ATP in a ssDNA-dependent manner and promotes DNA strand exchange between homologous DNA molecules. This Sulfurisphaera tokodaii (strain DSM 16993 / JCM 10545 / NBRC 100140 / 7) (Sulfolobus tokodaii) protein is DNA repair and recombination protein RadA.